Consider the following 530-residue polypeptide: Copine-D (530 aa).

C2 domains lie at M1–M122 and L130–I248. Residues D25, D31, D85, D87, and D100 each contribute to the Ca(2+) site. A VWFA domain is found at N289–I507.

It belongs to the copine family. Requires Ca(2+) as cofactor.

The protein is Copine-D (cpnD) of Dictyostelium discoideum (Social amoeba).